The sequence spans 327 residues: G protein pathway suppressor 2 (327 aa).

Residues 14 to 109 adopt a coiled-coil conformation; the sequence is MARALHRHIM…RRRKEQSDLT (96 aa). The segment at 26 to 65 is disordered; it reads RERKRQEEEEVDKMMEQKMKEEQERRKKKEMEERMSLEET. Residues lysine 45 and lysine 71 each participate in a glycyl lysine isopeptide (Lys-Gly) (interchain with G-Cter in SUMO1) cross-link. The interaction with SUMO stretch occupies residues 61-94; the sequence is SLEETKEQILKLQEKLSALQEEKHQLFLQLKKVL. Disordered regions lie at residues 178–208, 253–285, and 300–327; these read GQFQ…SPSQ, QKQM…APGL, and KSGF…FYHK. Residues 253-271 show a composition bias toward polar residues; sequence QKQMEHANQQTSFSDSSSL. Arginine 312 carries the asymmetric dimethylarginine modification. Positions 317 to 327 are enriched in polar residues; that stretch reads QHSQNPRFYHK. Arginine 323 carries the asymmetric dimethylarginine; alternate modification. Omega-N-methylarginine; alternate is present on arginine 323.

In terms of assembly, component of the N-Cor repressor complex, at least composed of NCOR1, NCOR2, HDAC3, TBL1X, TBL1R, CORO2A and GPS2. Interacts (when sumoylated at Lys-71) with TBL1X; leading to protect GPS2 from degradation by the proteasome. Interacts with UBE2N; leading to inhibit UBE2N/Ubc13 activity. Interacts with TRAF1. Interacts with TRAF2. Interacts with TRAF6. Interacts with PPARG (when in the liganded conformation). Interacts with (sumoylated) NR1H2; interaction with sumoylated NR1H2 and NR5A2 onto hepatic acute phase protein promoters prevents N-Cor corepressor complex dissociation. Interacts with (sumoylated) NR5A2; interaction with sumoylated NR1H2 and NR5A2 onto hepatic acute phase protein promoters prevents N-Cor corepressor complex dissociation. Interacts with NR1H3. Interacts with RFX4. Interacts with ANKRD26. Post-translationally, sumoylation regulates its subcellular location. Sumoylation at Lys-45 and Lys-71 regulates the shuttling between the cytoplasm and the nucleus. Sumoylation at Lys-71 is required for interaction with TBL1X. Sumoylated at Lys-45 and Lys-71 in mitochondrion. Desumoylation by SENP1 leads to relocation from the mitochondria to the nucleus. In terms of processing, ubiquitinated at the C-terminus by SIAH2; leading to its degradation by the proteasome. Interaction with TBL1X and methylation at Arg-323 protect GPS2 against ubiquitination and degradation. Methylated at Arg-312 and Arg-323 by PRMT6. Methylation at Arg-323 protects from degradation by the proteasome.

Its subcellular location is the nucleus. It is found in the mitochondrion. The protein resides in the cytoplasm. It localises to the cytosol. Functionally, key regulator of inflammation, lipid metabolism and mitochondrion homeostasis that acts by inhibiting the activity of the ubiquitin-conjugating enzyme UBE2N/Ubc13, thereby inhibiting 'Lys-63'-linked ubiquitination. In the nucleus, can both acts as a corepressor and coactivator of transcription, depending on the context. Acts as a transcription coactivator in adipocytes by promoting the recruitment of PPARG to promoters: acts by inhibiting the activity of the ubiquitin-conjugating enzyme UBE2N/Ubc13, leading to stabilization of KDM4A and subsequent histone H3 'Lys-9' (H3K9) demethylation. Promotes cholesterol efflux by acting as a transcription coactivator. Acts as a regulator of B-cell development by inhibiting UBE2N/Ubc13, thereby restricting the activation of Toll-like receptors (TLRs) and B-cell antigen receptors (BCRs) signaling pathways. Acts as a key mediator of mitochondrial stress response: in response to mitochondrial depolarization, relocates from the mitochondria to the nucleus following desumoylation and specifically promotes expression of nuclear-encoded mitochondrial genes. Promotes transcription of nuclear-encoded mitochondrial genes by inhibiting UBE2N/Ubc13. Can also act as a corepressor as part of the N-Cor repressor complex by repressing active PPARG. Plays an anti-inflammatory role in macrophages and is required for insulin sensitivity by acting as a corepressor. Plays an anti-inflammatory role during the hepatic acute phase response by interacting with sumoylated NR1H2 and NR5A2 proteins, thereby preventing N-Cor corepressor complex dissociation. In the cytosol, also plays a non-transcriptional role by regulating insulin signaling and pro-inflammatory pathways. In the cytoplasm, acts as a negative regulator of inflammation by inhibiting the pro-inflammatory TNF-alpha pathway; acts by repressing UBE2N/Ubc13 activity. In the cytoplasm of adipocytes, restricts the activation of insulin signaling via inhibition of UBE2N/Ubc13-mediated ubiquitination of AKT. Able to suppress G-protein- and mitogen-activated protein kinase-mediated signal transduction. This is G protein pathway suppressor 2 from Mus musculus (Mouse).